The sequence spans 257 residues: Pimeloyl-[acyl-carrier protein] methyl ester esterase (257 aa).

The region spanning 16 to 240 (LVLIHGWGMN…EQASHAPFIS (225 aa)) is the AB hydrolase-1 domain. Substrate contacts are provided by residues W22, 82–83 (SL), and 143–147 (FMALQ). Residue S82 is the Nucleophile of the active site. Catalysis depends on residues D207 and H235. H235 is a binding site for substrate.

The protein belongs to the AB hydrolase superfamily. Carboxylesterase BioH family. Monomer.

It is found in the cytoplasm. It catalyses the reaction 6-carboxyhexanoyl-[ACP] methyl ester + H2O = 6-carboxyhexanoyl-[ACP] + methanol + H(+). It functions in the pathway cofactor biosynthesis; biotin biosynthesis. In terms of biological role, the physiological role of BioH is to remove the methyl group introduced by BioC when the pimeloyl moiety is complete. It allows to synthesize pimeloyl-ACP via the fatty acid synthetic pathway through the hydrolysis of the ester bonds of pimeloyl-ACP esters. This chain is Pimeloyl-[acyl-carrier protein] methyl ester esterase, found in Aliivibrio fischeri (strain ATCC 700601 / ES114) (Vibrio fischeri).